The primary structure comprises 410 residues: Lipoyl synthase, mitochondrial (410 aa).

[4Fe-4S] cluster is bound by residues C134, C139, C145, C165, C169, C172, and S390. One can recognise a Radical SAM core domain in the interval 148 to 379 (AGKSTAATAT…AKIGNDLGFL (232 aa)).

This sequence belongs to the radical SAM superfamily. Lipoyl synthase family. Requires [4Fe-4S] cluster as cofactor.

Its subcellular location is the mitochondrion. It catalyses the reaction [[Fe-S] cluster scaffold protein carrying a second [4Fe-4S](2+) cluster] + N(6)-octanoyl-L-lysyl-[protein] + 2 oxidized [2Fe-2S]-[ferredoxin] + 2 S-adenosyl-L-methionine + 4 H(+) = [[Fe-S] cluster scaffold protein] + N(6)-[(R)-dihydrolipoyl]-L-lysyl-[protein] + 4 Fe(3+) + 2 hydrogen sulfide + 2 5'-deoxyadenosine + 2 L-methionine + 2 reduced [2Fe-2S]-[ferredoxin]. It functions in the pathway protein modification; protein lipoylation via endogenous pathway; protein N(6)-(lipoyl)lysine from octanoyl-[acyl-carrier-protein]: step 2/2. Functionally, catalyzes the radical-mediated insertion of two sulfur atoms into the C-6 and C-8 positions of the octanoyl moiety bound to the lipoyl domains of lipoate-dependent enzymes, thereby converting the octanoylated domains into lipoylated derivatives. In Schistosoma mansoni (Blood fluke), this protein is Lipoyl synthase, mitochondrial.